The sequence spans 383 residues: Putative 8-amino-7-oxononanoate synthase (383 aa).

A substrate-binding site is contributed by arginine 22. 109 to 110 is a pyridoxal 5'-phosphate binding site; sequence GY. Residue histidine 134 participates in substrate binding. Residues serine 182, 207–210, and 236–239 contribute to the pyridoxal 5'-phosphate site; these read DDAH and TLSK. Lysine 239 is modified (N6-(pyridoxal phosphate)lysine). Substrate is bound at residue threonine 348.

Belongs to the class-II pyridoxal-phosphate-dependent aminotransferase family. BioF subfamily. Homodimer. The cofactor is pyridoxal 5'-phosphate.

The enzyme catalyses 6-carboxyhexanoyl-[ACP] + L-alanine + H(+) = (8S)-8-amino-7-oxononanoate + holo-[ACP] + CO2. Its pathway is cofactor biosynthesis; biotin biosynthesis. In terms of biological role, catalyzes the decarboxylative condensation of pimeloyl-[acyl-carrier protein] and L-alanine to produce 8-amino-7-oxononanoate (AON), [acyl-carrier protein], and carbon dioxide. The chain is Putative 8-amino-7-oxononanoate synthase (bioF) from Caulobacter sp. (strain K31).